The following is a 433-amino-acid chain: Ribulose bisphosphate carboxylase/oxygenase activase, chloroplastic (433 aa).

The segment covering Met-1–Ser-20 has biased composition (polar residues). The N-terminal 53 residues, Met-1–Ala-53, are a transit peptide targeting the chloroplast. Residues Met-1–Lys-60 are disordered. Residue Gly-161–Ser-168 participates in ATP binding.

Belongs to the RuBisCO activase family.

It localises to the plastid. It is found in the chloroplast stroma. Functionally, activation of RuBisCO (ribulose-1,5-bisphosphate carboxylase/oxygenase; EC 4.1.1.39) involves the ATP-dependent carboxylation of the epsilon-amino group of lysine leading to a carbamate structure. In Zea mays (Maize), this protein is Ribulose bisphosphate carboxylase/oxygenase activase, chloroplastic (RCA1).